We begin with the raw amino-acid sequence, 189 residues long: dCTP deaminase (189 aa).

Residues 112–117 (KSTYAR), 136–138 (TLE), glutamine 157, tyrosine 171, and glutamine 181 contribute to the dCTP site. Glutamate 138 functions as the Proton donor/acceptor in the catalytic mechanism.

Belongs to the dCTP deaminase family. Homotrimer.

It catalyses the reaction dCTP + H2O + H(+) = dUTP + NH4(+). It participates in pyrimidine metabolism; dUMP biosynthesis; dUMP from dCTP (dUTP route): step 1/2. In terms of biological role, catalyzes the deamination of dCTP to dUTP. This chain is dCTP deaminase, found in Acinetobacter baumannii (strain SDF).